We begin with the raw amino-acid sequence, 657 residues long: Tyrosine-protein phosphatase vhp-1 (657 aa).

One can recognise a Rhodanese domain in the interval 21-151 (APDTTLVVDC…FAQQYPQLCE (131 aa)). The region spanning 175–318 (GITLITPNIY…LLEYENVLIK (144 aa)) is the Tyrosine-protein phosphatase domain. Catalysis depends on Cys-262, which acts as the Phosphocysteine intermediate. Disordered stretches follow at residues 353–426 (SNCV…MDLG), 539–563 (VPAG…SSSA), and 581–657 (PAST…PCHQ). Residues 366–405 (SPSSPSVSEGSAASEPETSSSAASSSSTASAPPSMPSTSE) show a composition bias toward low complexity. Over residues 406–419 (QGTSSGTVNVNGKR) the composition is skewed to polar residues. Low complexity-rich tracts occupy residues 542-563 (GSSS…SSSA) and 581-597 (PAST…TSRA).

This sequence belongs to the protein-tyrosine phosphatase family. Non-receptor class dual specificity subfamily. May interact with pmk-3. As to expression, expressed in the pharynx, intestine, neurons and vulval hypodermal cells.

It catalyses the reaction O-phospho-L-tyrosyl-[protein] + H2O = L-tyrosyl-[protein] + phosphate. Functionally, acts preferentially on the c-Jun N-terminal kinase (JNK) and p38 MAPKs. Plays an important role in the heavy metal stress response and in axon regeneration by negatively regulating the kgb-1 (JNK-like) and the pmk-1 (p38-type) MAPK signaling pathways. In Caenorhabditis elegans, this protein is Tyrosine-protein phosphatase vhp-1 (vhp-1).